A 167-amino-acid polypeptide reads, in one-letter code: MSTLLWLLSFMLHGVLLYAVIILYTRLAAVKETEKQQKQILEETENTLAAFLLELKEENEKLIENKASSASQSDEESQKSGLQTSETYQERDPVQEAENLPEHIEGLITEVDRREELVNSEVQSFEDQVIELYEQGYSASQIAQKMKSGKTEIELFLKFRSKGVKDS.

The segment at 63-105 (IENKASSASQSDEESQKSGLQTSETYQERDPVQEAENLPEHIE) is disordered. A compositionally biased stretch (basic and acidic residues) spans 88-105 (YQERDPVQEAENLPEHIE).

Required for swarming motility and for maximal sigma-D activity. In Bacillus subtilis (strain 168), this protein is Swarming motility protein SwrB (swrB).